The sequence spans 102 residues: uncharacterized protein (102 aa).

Transmembrane regions (helical) follow at residues 1-21 (MVPL…LRPV), 42-62 (SIID…LILV), and 68-88 (SIHA…FSIV).

Its subcellular location is the membrane. This is an uncharacterized protein from Saccharomyces cerevisiae (strain ATCC 204508 / S288c) (Baker's yeast).